Consider the following 303-residue polypeptide: Uricase (303 aa).

Residues Lys12 and Thr60 each act as charge relay system in the active site. Residues Thr60, Asp61, Phe162, Arg179, Val234, Gln235, and Asn261 each contribute to the urate site. The active-site Charge relay system is the His263. Residues 301 to 303 carry the Microbody targeting signal motif; that stretch reads TKL.

This sequence belongs to the uricase family.

The protein resides in the peroxisome. The enzyme catalyses urate + O2 + H2O = 5-hydroxyisourate + H2O2. Its pathway is purine metabolism; urate degradation; (S)-allantoin from urate: step 1/3. Its function is as follows. Catalyzes the oxidation of uric acid to 5-hydroxyisourate, which is further processed to form (S)-allantoin. In Cyberlindnera jadinii (Torula yeast), this protein is Uricase.